A 63-amino-acid polypeptide reads, in one-letter code: Toxin Tx7335 (63 aa).

4 disulfide bridges follow: C3–C24, C17–C39, C25–C55, and C56–C61.

Post-translationally, contains 4 disulfide bonds. In terms of tissue distribution, expressed by the venom gland.

It is found in the secreted. Functionally, activates bacterial pH-gated potassium channel KcsA by binding to its extracellular domain, probably at a site different from channel inhibitors. Increases both mean open time and open probability of KscA. The sequence is that of Toxin Tx7335 from Dendroaspis angusticeps (Eastern green mamba).